The chain runs to 166 residues: 2-C-methyl-D-erythritol 2,4-cyclodiphosphate synthase (166 aa).

Asp-15 and His-17 together coordinate a divalent metal cation. 4-CDP-2-C-methyl-D-erythritol 2-phosphate is bound by residues 15 to 17 and 43 to 44; these read DVH and HS. His-51 serves as a coordination point for a divalent metal cation. Residues 65-67, 141-144, and Arg-151 contribute to the 4-CDP-2-C-methyl-D-erythritol 2-phosphate site; these read DIG and TTNE.

The protein belongs to the IspF family. As to quaternary structure, homotrimer. It depends on a divalent metal cation as a cofactor.

It carries out the reaction 4-CDP-2-C-methyl-D-erythritol 2-phosphate = 2-C-methyl-D-erythritol 2,4-cyclic diphosphate + CMP. It participates in isoprenoid biosynthesis; isopentenyl diphosphate biosynthesis via DXP pathway; isopentenyl diphosphate from 1-deoxy-D-xylulose 5-phosphate: step 4/6. Its function is as follows. Involved in the biosynthesis of isopentenyl diphosphate (IPP) and dimethylallyl diphosphate (DMAPP), two major building blocks of isoprenoid compounds. Catalyzes the conversion of 4-diphosphocytidyl-2-C-methyl-D-erythritol 2-phosphate (CDP-ME2P) to 2-C-methyl-D-erythritol 2,4-cyclodiphosphate (ME-CPP) with a corresponding release of cytidine 5-monophosphate (CMP). The protein is 2-C-methyl-D-erythritol 2,4-cyclodiphosphate synthase of Synechococcus sp. (strain CC9311).